A 711-amino-acid polypeptide reads, in one-letter code: Polyribonucleotide nucleotidyltransferase (711 aa).

Positions 486 and 492 each coordinate Mg(2+). Positions 553 to 612 constitute a KH domain; it reads PRIHTIKINPDKIKDVIGKGGSVIRALTEETGTTIEIEDDGTVKIAATDGEKAKHAIRRI. The 69-residue stretch at 622-690 folds into the S1 motif domain; the sequence is GRVYTGKVTR…RQGRIRLSIK (69 aa). The interval 689 to 711 is disordered; that stretch reads IKEATEQSQPAAAPEAPAAEQGE. The span at 694-711 shows a compositional bias: low complexity; it reads EQSQPAAAPEAPAAEQGE.

This sequence belongs to the polyribonucleotide nucleotidyltransferase family. Component of the RNA degradosome, which is a multiprotein complex involved in RNA processing and mRNA degradation. Mg(2+) serves as cofactor.

The protein localises to the cytoplasm. It carries out the reaction RNA(n+1) + phosphate = RNA(n) + a ribonucleoside 5'-diphosphate. Its function is as follows. Involved in mRNA degradation. Catalyzes the phosphorolysis of single-stranded polyribonucleotides processively in the 3'- to 5'-direction. The sequence is that of Polyribonucleotide nucleotidyltransferase from Escherichia coli (strain ATCC 8739 / DSM 1576 / NBRC 3972 / NCIMB 8545 / WDCM 00012 / Crooks).